Consider the following 415-residue polypeptide: Tyrosine--tRNA ligase (415 aa).

Tyrosine 34 lines the L-tyrosine pocket. The 'HIGH' region signature appears at 39 to 48 (PTSDSLTVGH). Residues tyrosine 164 and glutamine 168 each contribute to the L-tyrosine site. Positions 225-229 (KFGKS) match the 'KMSKS' region motif. Lysine 228 provides a ligand contact to ATP. The S4 RNA-binding domain maps to 348–414 (IPLSEALVKT…GKKNNSLIIL (67 aa)).

The protein belongs to the class-I aminoacyl-tRNA synthetase family. TyrS type 1 subfamily. In terms of assembly, homodimer.

It is found in the cytoplasm. It catalyses the reaction tRNA(Tyr) + L-tyrosine + ATP = L-tyrosyl-tRNA(Tyr) + AMP + diphosphate + H(+). Functionally, catalyzes the attachment of tyrosine to tRNA(Tyr) in a two-step reaction: tyrosine is first activated by ATP to form Tyr-AMP and then transferred to the acceptor end of tRNA(Tyr). This Phytoplasma australiense protein is Tyrosine--tRNA ligase.